Here is a 102-residue protein sequence, read N- to C-terminus: NADH-quinone oxidoreductase subunit K (102 aa).

Helical transmembrane passes span 5–25, 30–50, and 63–83; these read ALTGMMIVAAGLFAAGVFGVL, ILFQLISLEVALSGPALAFIA, and MFVLVLTLAAAEVAVGLALFL.

This sequence belongs to the complex I subunit 4L family. As to quaternary structure, NDH-1 is composed of 14 different subunits. Subunits NuoA, H, J, K, L, M, N constitute the membrane sector of the complex.

The protein resides in the cell inner membrane. The enzyme catalyses a quinone + NADH + 5 H(+)(in) = a quinol + NAD(+) + 4 H(+)(out). Its function is as follows. NDH-1 shuttles electrons from NADH, via FMN and iron-sulfur (Fe-S) centers, to quinones in the respiratory chain. The immediate electron acceptor for the enzyme in this species is believed to be ubiquinone. Couples the redox reaction to proton translocation (for every two electrons transferred, four hydrogen ions are translocated across the cytoplasmic membrane), and thus conserves the redox energy in a proton gradient. This is NADH-quinone oxidoreductase subunit K from Rhodopseudomonas palustris (strain BisB18).